The chain runs to 449 residues: Hyaluronidase-3 (449 aa).

The N-terminal stretch at 1–23 (MYHIWIKFLAAWIFLKKFNGVHV) is a signal peptide. Disulfide bonds link Cys-47–Cys-340 and Cys-211–Cys-227. N-linked (GlcNAc...) asparagine glycans are attached at residues Asn-67, Asn-103, and Asn-111. Glu-135 serves as the catalytic Proton donor. N-linked (GlcNAc...) asparagine glycosylation occurs at Asn-153. N-linked (GlcNAc...) asparagine glycosylation occurs at Asn-357. Intrachain disulfides connect Cys-365-Cys-376, Cys-370-Cys-427, and Cys-429-Cys-438. A glycan (N-linked (GlcNAc...) asparagine) is linked at Asn-401. The EGF-like domain occupies 427–438 (CQCYQGWKGLYC).

The protein belongs to the glycosyl hydrolase 56 family. As to quaternary structure, monomer. Expressed by the venom gland.

The protein resides in the secreted. The catalysed reaction is Random hydrolysis of (1-&gt;4)-linkages between N-acetyl-beta-D-glucosamine and D-glucuronate residues in hyaluronate.. In terms of biological role, snake venom endo-hyaluronidase that degrades hyaluronan to smaller oligosaccharide fragments. In venom, it is not toxic by itself, but increases the diffusion of other venom proteins by degrading the extracellular matrix. In addition, it displays antiedematogenic activity. This Cerastes cerastes (Horned desert viper) protein is Hyaluronidase-3.